Reading from the N-terminus, the 304-residue chain is MTLRQAIDLAAALLAEAGVDSARCDAEQLAAHLAGTDRGRLPLFEPPGDEFFGRYRDIVTARARRVPLQHLIGTVSFGPVVLHVGPGVFVPRPETEAILAWATAQSLPARPLIVDACTGSGALAVALAQHRANLGLKARIIGIDDSDCALDYARRNAAGTPVELVRADVTTPCLLPELDGQVDLMVSNPPYIPDAAVLEPEVAQHDPHHALFGGPDGMTVISAVVGLAGRWLRPGGLFAVEHDDTTSSSTVDLVSSTKLFVDVQARKDLAGRPRFVTAMRWGHLPLAGENGAIDPRQRRCRAKR.

Asp-144 and Asn-188 together coordinate S-adenosyl-L-methionine. 188–191 (NPPY) is a binding site for substrate.

It belongs to the protein N5-glutamine methyltransferase family. PrmC subfamily.

The enzyme catalyses L-glutaminyl-[peptide chain release factor] + S-adenosyl-L-methionine = N(5)-methyl-L-glutaminyl-[peptide chain release factor] + S-adenosyl-L-homocysteine + H(+). In terms of biological role, methylates the class 1 translation termination release factors RF1/PrfA and RF2/PrfB on the glutamine residue of the universally conserved GGQ motif. This Mycobacterium tuberculosis (strain CDC 1551 / Oshkosh) protein is Release factor glutamine methyltransferase.